The sequence spans 361 residues: Histidinol-phosphate aminotransferase (361 aa).

Lys220 is modified (N6-(pyridoxal phosphate)lysine).

This sequence belongs to the class-II pyridoxal-phosphate-dependent aminotransferase family. Histidinol-phosphate aminotransferase subfamily. As to quaternary structure, homodimer. Requires pyridoxal 5'-phosphate as cofactor.

The catalysed reaction is L-histidinol phosphate + 2-oxoglutarate = 3-(imidazol-4-yl)-2-oxopropyl phosphate + L-glutamate. It functions in the pathway amino-acid biosynthesis; L-histidine biosynthesis; L-histidine from 5-phospho-alpha-D-ribose 1-diphosphate: step 7/9. This chain is Histidinol-phosphate aminotransferase, found in Syntrophus aciditrophicus (strain SB).